A 149-amino-acid chain; its full sequence is Large ribosomal subunit protein bL9 (149 aa).

Belongs to the bacterial ribosomal protein bL9 family.

In terms of biological role, binds to the 23S rRNA. The sequence is that of Large ribosomal subunit protein bL9 from Histophilus somni (strain 129Pt) (Haemophilus somnus).